Consider the following 248-residue polypeptide: Indole-3-glycerol phosphate synthase (248 aa).

It belongs to the TrpC family.

It catalyses the reaction 1-(2-carboxyphenylamino)-1-deoxy-D-ribulose 5-phosphate + H(+) = (1S,2R)-1-C-(indol-3-yl)glycerol 3-phosphate + CO2 + H2O. The protein operates within amino-acid biosynthesis; L-tryptophan biosynthesis; L-tryptophan from chorismate: step 4/5. This Sulfolobus acidocaldarius (strain ATCC 33909 / DSM 639 / JCM 8929 / NBRC 15157 / NCIMB 11770) protein is Indole-3-glycerol phosphate synthase.